The primary structure comprises 586 residues: Transmembrane protease serine 13 (586 aa).

2 disordered regions span residues 1-115 (MERD…VTTS) and 131-157 (PIRS…LPKF). Over 1–165 (MERDSHGNAS…KFTWREGQKQ (165 aa)) the chain is Cytoplasmic. The 1-1 repeat unit spans residues 9-13 (ASPAR). The tract at residues 9-93 (ASPARTPSAG…ASPARASPAL (85 aa)) is 13 X 5 AA repeats of A-S-P-A-[GLQR]. A 2-1; approximate repeat occupies 14–18 (TPSAG). The span at 14–52 (TPSAGASPAQASPAGTPPGRASPAQASPAQASPAGTPPG) shows a compositional bias: low complexity. The 4 X 5 AA repeats of T-P-P-G-R stretch occupies residues 14–68 (TPSAGASPAQASPAGTPPGRASPAQASPAQASPAGTPPGRASPAQASPAGTPPGR). 10 consecutive repeat copies span residues 19–23 (ASPAQ), 24–28 (ASPAG), 29–33 (TPPGR), 34–38 (ASPAQ), 39–43 (ASPAQ), 44–48 (ASPAG), 49–53 (TPPGR), 54–58 (ASPAQ), 59–63 (ASPAG), and 64–68 (TPPGR). The 1-9; approximate repeat unit spans residues 69 to 78 (ASPGRASPAQ). 2 stretches are compositionally biased toward low complexity: residues 69–111 (ASPG…RSAS) and 133–144 (RSSPARSAPATR). A run of 3 repeats spans residues 79 to 83 (ASPAQ), 84 to 88 (ASPAR), and 89 to 93 (ASPAL). Residues 166-186 (LPLIGCVLLLIALVVSLIILF) traverse the membrane as a helical; Signal-anchor for type II membrane protein segment. Topologically, residues 187-586 (QFWQGHTGIR…GGDPGGAPRL (400 aa)) are extracellular. One can recognise an SRCR domain in the interval 195 to 325 (IRYKEQRESC…HCGLRAMTGR (131 aa)). Positions 204 to 226 (CPKHAVRCDGVVDCKLKSDELGC) constitute an LDL-receptor class A domain. 3 cysteine pairs are disulfide-bonded: cysteine 250–cysteine 314, cysteine 263–cysteine 317, and cysteine 351–cysteine 367. N-linked (GlcNAc...) asparagine glycosylation is found at asparagine 255 and asparagine 292. The Peptidase S1 domain occupies 326–559 (IVGGALASDS…VLPWIYSKME (234 aa)). Residue histidine 366 is the Charge relay system of the active site. N-linked (GlcNAc...) asparagine glycosylation occurs at asparagine 405. The Charge relay system role is filled by aspartate 414. Asparagine 445 carries an N-linked (GlcNAc...) asparagine glycan. 3 disulfide bridges follow: cysteine 448-cysteine 517, cysteine 480-cysteine 496, and cysteine 507-cysteine 535. Serine 511 serves as the catalytic Charge relay system. The segment covering 565-574 (QDTAPSRLGT) has biased composition (polar residues). The interval 565 to 586 (QDTAPSRLGTSSGGDPGGAPRL) is disordered. Positions 575-586 (SSGGDPGGAPRL) are enriched in gly residues.

It belongs to the peptidase S1 family. In terms of assembly, interacts with SPINT1/HAI-1; the interaction promotes the phosphorylation and cell membrane localization of TMPRSS13. Interacts with SPINT2/HAI-2; the interaction promotes the phosphorylation and cell membrane localization of TMPRSS13. Post-translationally, the inactive zymogen is post-translationally modified and then trafficked to the cell surface, whereby it undergoes autocatalytic cleavage resulting in an activated form that is released extracellularly. Phosphorylation is required for localization at the cell surface. Phosphorylation increases following inhibition of protease activity by SPINT2/HAI-2. In terms of processing, N-glycosylation of Asn-405 and Asn-445 is required for exit from the endoplasmic reticulum and trafficking to the cell surface. Also required for autocleavage of the zymogen, activation and secretion of the mature protein. In terms of tissue distribution, expressed in placenta. As to expression, predominantly expressed in lung, placenta, pancreas, and prostate. Expressed in lung, placenta, pancreas, and prostate. Weakly expressed in testis and peripheral blood lymphocytes.

It is found in the cell membrane. Its subcellular location is the secreted. It localises to the cytoplasm. Its activity is regulated as follows. Cleavage of HGF is inhibited by SPINT1/HAI-1 via the BPTI/Kunitz inhibitor 1 domain. In terms of biological role, serine protease. Cleaves the proform of PRSS8/prostasin to form the active protein. Cleaves the proform of HGF to form the active protein which promotes MAPK signaling. Promotes the formation of the stratum corneum and subsequently the epidermal barrier in embryos. The protein is Transmembrane protease serine 13 (TMPRSS13) of Homo sapiens (Human).